Here is a 95-residue protein sequence, read N- to C-terminus: MNLYDVIRRPLVTEKGVMKKDTERTLCFEVSADANKTQVKSAVEKLFKVKVDEVRTATFEGKLRRRGRFSGYRSDWKKAYVKLKAGEKVPDFAEI.

The protein belongs to the universal ribosomal protein uL23 family. In terms of assembly, part of the 50S ribosomal subunit. Contacts protein L29, and trigger factor when it is bound to the ribosome.

Its function is as follows. One of the early assembly proteins it binds 23S rRNA. One of the proteins that surrounds the polypeptide exit tunnel on the outside of the ribosome. Forms the main docking site for trigger factor binding to the ribosome. This Solibacter usitatus (strain Ellin6076) protein is Large ribosomal subunit protein uL23.